We begin with the raw amino-acid sequence, 944 residues long: Leucine--tRNA ligase (944 aa).

Residues 40-51 (PYPSGAGLHVGH) carry the 'HIGH' region motif. The 'KMSKS' region signature appears at 718-722 (KMSKS). ATP is bound at residue K721.

Belongs to the class-I aminoacyl-tRNA synthetase family.

The protein resides in the cytoplasm. It carries out the reaction tRNA(Leu) + L-leucine + ATP = L-leucyl-tRNA(Leu) + AMP + diphosphate. The chain is Leucine--tRNA ligase from Phocaeicola vulgatus (strain ATCC 8482 / DSM 1447 / JCM 5826 / CCUG 4940 / NBRC 14291 / NCTC 11154) (Bacteroides vulgatus).